The primary structure comprises 599 residues: Elongation factor 4 (599 aa).

The 183-residue stretch at 2 to 184 (KNIRNFSIIA…RLVRDIPPPE (183 aa)) folds into the tr-type G domain. GTP-binding positions include 14-19 (DHGKST) and 131-134 (NKID).

The protein belongs to the TRAFAC class translation factor GTPase superfamily. Classic translation factor GTPase family. LepA subfamily.

It localises to the cell inner membrane. The catalysed reaction is GTP + H2O = GDP + phosphate + H(+). Functionally, required for accurate and efficient protein synthesis under certain stress conditions. May act as a fidelity factor of the translation reaction, by catalyzing a one-codon backward translocation of tRNAs on improperly translocated ribosomes. Back-translocation proceeds from a post-translocation (POST) complex to a pre-translocation (PRE) complex, thus giving elongation factor G a second chance to translocate the tRNAs correctly. Binds to ribosomes in a GTP-dependent manner. This is Elongation factor 4 from Escherichia coli (strain SE11).